Reading from the N-terminus, the 147-residue chain is Hemoglobin subunit epsilon (147 aa).

Residues 3–147 (HFTAEEKSVI…VATALAHKYH (145 aa)) enclose the Globin domain. Residue serine 51 is modified to Phosphoserine. Heme b-binding residues include histidine 64 and histidine 93.

It belongs to the globin family. Red blood cells.

Its function is as follows. Hemoglobin epsilon chain is a beta-type chain found in early embryos. This Sus scrofa (Pig) protein is Hemoglobin subunit epsilon (HBE1).